A 128-amino-acid polypeptide reads, in one-letter code: Small ribosomal subunit protein uS9 (128 aa).

Belongs to the universal ribosomal protein uS9 family.

The chain is Small ribosomal subunit protein uS9 from Christiangramia forsetii (strain DSM 17595 / CGMCC 1.15422 / KT0803) (Gramella forsetii).